A 334-amino-acid polypeptide reads, in one-letter code: Malate dehydrogenase, cytoplasmic (334 aa).

NAD(+) is bound at residue 11–17 (GAAGQIA). 2 residues coordinate substrate: Arg92 and Arg98. Residues Asn105, Gln112, and 129 to 131 (VGN) contribute to the NAD(+) site. The substrate site is built by Asn131 and Arg162. Catalysis depends on His187, which acts as the Proton acceptor.

Belongs to the LDH/MDH superfamily. MDH type 2 family. As to quaternary structure, homodimer.

The protein resides in the cytoplasm. Its subcellular location is the cytosol. The catalysed reaction is (S)-malate + NAD(+) = oxaloacetate + NADH + H(+). The enzyme catalyses (S)-2-hydroxyglutarate + NAD(+) = 2-oxoglutarate + NADH + H(+). Its function is as follows. Catalyzes the reduction of aromatic alpha-keto acids in the presence of NADH. Plays essential roles in the malate-aspartate shuttle and the tricarboxylic acid cycle, important in mitochondrial NADH supply for oxidative phosphorylation. Catalyzes the reduction of 2-oxoglutarate to 2-hydroxyglutarate, leading to elevated reactive oxygen species (ROS). The chain is Malate dehydrogenase, cytoplasmic (MDH1) from Gallus gallus (Chicken).